Reading from the N-terminus, the 336-residue chain is 3-isopropylmalate dehydrogenase (336 aa).

Arg87, Arg97, Arg121, and Asp211 together coordinate substrate. Mg(2+) is bound by residues Asp211, Asp235, and Asp239. NAD(+) is bound at residue 271-283; that stretch reads GSAPDIAGQGIAD.

Belongs to the isocitrate and isopropylmalate dehydrogenases family. LeuB type 2 subfamily. Homodimer. Mg(2+) is required as a cofactor. The cofactor is Mn(2+).

The protein localises to the cytoplasm. The enzyme catalyses (2R,3S)-3-isopropylmalate + NAD(+) = 4-methyl-2-oxopentanoate + CO2 + NADH. Its pathway is amino-acid biosynthesis; L-leucine biosynthesis; L-leucine from 3-methyl-2-oxobutanoate: step 3/4. Catalyzes the oxidation of 3-carboxy-2-hydroxy-4-methylpentanoate (3-isopropylmalate) to 3-carboxy-4-methyl-2-oxopentanoate. The product decarboxylates to 4-methyl-2 oxopentanoate. This is 3-isopropylmalate dehydrogenase from Mycolicibacterium paratuberculosis (strain ATCC BAA-968 / K-10) (Mycobacterium paratuberculosis).